A 387-amino-acid chain; its full sequence is Alanine racemase (387 aa).

Catalysis depends on Lys38, which acts as the Proton acceptor; specific for D-alanine. Lys38 bears the N6-(pyridoxal phosphate)lysine mark. A substrate-binding site is contributed by Arg136. Tyr267 serves as the catalytic Proton acceptor; specific for L-alanine. Met315 is a substrate binding site.

The protein belongs to the alanine racemase family. Pyridoxal 5'-phosphate serves as cofactor.

The enzyme catalyses L-alanine = D-alanine. It functions in the pathway amino-acid biosynthesis; D-alanine biosynthesis; D-alanine from L-alanine: step 1/1. Functionally, catalyzes the interconversion of L-alanine and D-alanine. May also act on other amino acids. This chain is Alanine racemase (alr), found in Clostridium novyi (strain NT).